Reading from the N-terminus, the 887-residue chain is Centrobin (887 aa).

Positions 1–34 (MATAAPSPSSPLRPEDLLSDSSEPPGLNQVSSEV) are disordered. The residue at position 81 (S81) is a Phosphoserine. Disordered regions lie at residues 110-153 (MLHT…PSSS), 465-486 (SLRQAASLRDHHRKQLQELSGQ), 566-591 (TLLPPNPQAPLAEPSSPGPLEPEKGE), and 636-695 (LGPP…LPPA). Basic and acidic residues predominate over residues 113–128 (TSRDTAYRTGSERREE). Residues 133-153 (SDSTATLLNTRPLQDLSPSSS) are compositionally biased toward polar residues. Positions 191 to 557 (RRKHCERHIQ…LQAMLQAHWE (367 aa)) form a coiled coil. The tract at residues 360 to 887 (QEHQLKERLQ…SMRSRGGIWR (528 aa)) is required for centrosome localization. Basic and acidic residues predominate over residues 670-680 (TDDHRAERPFP). Position 782 is a phosphoserine (S782). The interval 824-887 (GTDGQGELVP…SMRSRGGIWR (64 aa)) is disordered. A compositionally biased stretch (basic and acidic residues) spans 832–849 (VPRRNTDSRLGETTRKEI).

As to quaternary structure, interacts with LYST.

It is found in the cytoplasm. Its subcellular location is the cytoskeleton. The protein localises to the microtubule organizing center. It localises to the centrosome. The protein resides in the centriole. Required for centriole duplication. Inhibition of centriole duplication leading to defects in cytokinesis. This Mus musculus (Mouse) protein is Centrobin (Cntrob).